The sequence spans 709 residues: Ribosomal RNA large subunit methyltransferase K/L (709 aa).

The THUMP domain maps to 43–154 (LAYRITLWTR…NGVITIAMNF (112 aa)).

Belongs to the methyltransferase superfamily. RlmKL family.

The protein localises to the cytoplasm. The catalysed reaction is guanosine(2445) in 23S rRNA + S-adenosyl-L-methionine = N(2)-methylguanosine(2445) in 23S rRNA + S-adenosyl-L-homocysteine + H(+). It catalyses the reaction guanosine(2069) in 23S rRNA + S-adenosyl-L-methionine = N(2)-methylguanosine(2069) in 23S rRNA + S-adenosyl-L-homocysteine + H(+). Its function is as follows. Specifically methylates the guanine in position 2445 (m2G2445) and the guanine in position 2069 (m7G2069) of 23S rRNA. The protein is Ribosomal RNA large subunit methyltransferase K/L of Shewanella baltica (strain OS155 / ATCC BAA-1091).